A 315-amino-acid chain; its full sequence is Probable HTH-type transcriptional regulator SinR (315 aa).

The HTH lysR-type domain maps to 8 to 65 (RGMRDWMIFIKVAEVGNLSRAARELDISISAVSKSLSRLENSIEVTLLRRDSHHLELT). Residues 25–44 (LSRAARELDISISAVSKSLS) constitute a DNA-binding region (H-T-H motif).

It belongs to the LysR transcriptional regulatory family.

Functionally, probable regulatory protein. Its target is not known. In Salmonella typhimurium (strain LT2 / SGSC1412 / ATCC 700720), this protein is Probable HTH-type transcriptional regulator SinR (sinR).